Here is a 166-residue protein sequence, read N- to C-terminus: Immunity protein RhsIB (166 aa).

In terms of biological role, immunity component of a toxin-immunity protein module, which functions as a cellular contact-dependent growth inhibition (CDI) system. Specifically inhibits its cognate toxin RhsB. Cell contact is necessary for growth inhibition. This Dickeya dadantii (strain 3937) (Erwinia chrysanthemi (strain 3937)) protein is Immunity protein RhsIB (rhsIB).